We begin with the raw amino-acid sequence, 146 residues long: MKLHELKAAEGTRKERNRVGRGMSSGNGKTSGRGHKGQKARSGGGVRPGFEGGQMPLFQRLPKRGFTNVNRKEYAIVNLDTLNRFEEGTEITPELLLETGVVSKLNAGIKILGKGTLEKKLTVKAHKFSASAKEAIETAGGQSEVI.

Residues 1 to 18 (MKLHELKAAEGTRKERNR) show a composition bias toward basic and acidic residues. A disordered region spans residues 1–58 (MKLHELKAAEGTRKERNRVGRGMSSGNGKTSGRGHKGQKARSGGGVRPGFEGGQMPLF). The segment covering 42–52 (SGGGVRPGFEG) has biased composition (gly residues).

This sequence belongs to the universal ribosomal protein uL15 family. As to quaternary structure, part of the 50S ribosomal subunit.

Binds to the 23S rRNA. This is Large ribosomal subunit protein uL15 from Oceanobacillus iheyensis (strain DSM 14371 / CIP 107618 / JCM 11309 / KCTC 3954 / HTE831).